A 692-amino-acid polypeptide reads, in one-letter code: Polyribonucleotide nucleotidyltransferase (692 aa).

Aspartate 484 and aspartate 490 together coordinate Mg(2+). The 64-residue stretch at 551-614 (PKYFIHKISQ…ALVERVKSIT (64 aa)) folds into the KH domain. An S1 motif domain is found at 620-688 (GAVYTGKVKT…NRGRIRLSRK (69 aa)).

It belongs to the polyribonucleotide nucleotidyltransferase family. Requires Mg(2+) as cofactor.

The protein resides in the cytoplasm. The catalysed reaction is RNA(n+1) + phosphate = RNA(n) + a ribonucleoside 5'-diphosphate. Involved in mRNA degradation. Catalyzes the phosphorolysis of single-stranded polyribonucleotides processively in the 3'- to 5'-direction. The polypeptide is Polyribonucleotide nucleotidyltransferase (Desulfotalea psychrophila (strain LSv54 / DSM 12343)).